Consider the following 331-residue polypeptide: Protein FLX-like 1 (331 aa).

The tract at residues 1-51 (MSGRNRGPPPPSMKGGSYSGLQAPVHQPPFVRGLGGGPVPPPPHPSMIDDS) is disordered. Residues 69 to 252 (ILEDRLAAQN…AEIANSETSA (184 aa)) are a coiled coil. A compositionally biased stretch (low complexity) spans 306–321 (QAAWAGGYDPQQQQQQ). Positions 306–331 (QAAWAGGYDPQQQQQQQPPPQGQGHR) are disordered. Residues 322–331 (QPPPQGQGHR) are compositionally biased toward pro residues.

The protein belongs to the FLX family. In terms of assembly, interacts with FRI.

Functionally, has no transcriptional activation activity. The sequence is that of Protein FLX-like 1 (FLXL1) from Arabidopsis thaliana (Mouse-ear cress).